The chain runs to 189 residues: Receptor activity-modifying protein 2 (189 aa).

Positions 1 to 44 are cleaved as a signal peptide; sequence MAPLRVERAPGGSRLGVTRAQRPTALCLPPLLLLLLLLLGAVSA. Residues 45-157 are Extracellular-facing; it reads SPESLNQSLP…VQPTFSDPPE (113 aa). The segment covering 49–61 has biased composition (polar residues); sequence LNQSLPESQNQSH. A disordered region spans residues 49 to 69; sequence LNQSLPESQNQSHPTEDSLVS. 4 N-linked (GlcNAc...) asparagine glycosylation sites follow: Asn-50, Asn-58, Asn-99, and Asn-144. Cystine bridges form between Cys-83/Cys-113 and Cys-98/Cys-145. A helical transmembrane segment spans residues 158 to 179; that stretch reads DVLLAMIIAPICLIPFLVTLVV. The Cytoplasmic portion of the chain corresponds to 180-189; it reads WRSKDSDAQA.

It belongs to the RAMP family. In terms of assembly, heterodimer of CALCRL and RAMP2; the interaction forms the receptor complex for adrenomedullin/ADM. Heterodimer of CALCR and RAMP2; interaction forms the AMYR2 receptor complex for calcitonin/CALC and amylin/IAPP. As to expression, ubiquitous. Expressed predominantly in embryonic brain, lung and gut and in adult heart, lung, skeletal muscle and brain.

It localises to the cell membrane. Accessory protein that interacts with and modulates the function of G-protein coupled receptors including calcitonin gene-related peptide type 1 receptor (CALCRL) and calcitonin receptor (CALCR). Required for the transport of CALCRL to the plasma membrane. Together with CALCRL, form a receptor complex for adrenomedullin/ADM. Together with CALCR, act as a receptor complex for calcitonin/CT/CALC. Together with CALCR, also act as a receptor complex for amylin/IAPP. The sequence is that of Receptor activity-modifying protein 2 from Mus musculus (Mouse).